The chain runs to 281 residues: Acidic leucine-rich nuclear phosphoprotein 32-related protein (281 aa).

LRR repeat units lie at residues 29-52 (YESL…EKEL), 56-78 (FKNL…IPSI), 79-103 (ATLN…IVQN), and 105-128 (PNIK…TLKE). Residues 140–178 (NPFADNPNYRKELFEFLPNVKIIDCYNKEGMEVLSSDEE) enclose the LRRCT domain. A compositionally biased stretch (acidic residues) spans 197 to 244 (FKDEDDEDEEFVPNDNEDDDEDDELDDDLEDEDMEDLDKEDLDKEDYD). The interval 197–281 (FKDEDDEDEE…DMDLKKTKLE (85 aa)) is disordered. Residues 245–266 (IDTKETEGVNKDEKSNKRKQDA) show a composition bias toward basic and acidic residues.

It belongs to the ANP32 family.

This is Acidic leucine-rich nuclear phosphoprotein 32-related protein from Plasmodium falciparum (isolate 3D7).